The following is a 113-amino-acid chain: Signal peptidase complex subunit 1 (113 aa).

The Cytoplasmic portion of the chain corresponds to 1-32 (MDGMIAMLPAPLQQLSSHIDFQGQKVAERTYQ). The chain crosses the membrane as a helical span at residues 33–53 (VILTLAGIIGFFVGYSTQQLS). Residues 54-57 (YAMY) are Lumenal-facing. A helical transmembrane segment spans residues 58–78 (TVMGAAVFTALIILPPWPFLF). Residues 79 to 113 (RKNPIVWQTPIEEQEASSSSDNEKKDKKKETKKTK) are Cytoplasmic-facing. The tract at residues 89 to 113 (IEEQEASSSSDNEKKDKKKETKKTK) is disordered.

The protein belongs to the SPCS1 family. As to quaternary structure, component of the signal peptidase complex (SPC) composed of a catalytic subunit sec-11 and three accessory subunits spcs-1, spcs-2 and spcs-3. The complex induces a local thinning of the ER membrane which is used to measure the length of the signal peptide (SP) h-region of protein substrates. This ensures the selectivity of the complex towards h-regions shorter than 18-20 amino acids.

Its subcellular location is the endoplasmic reticulum membrane. In terms of biological role, component of the signal peptidase complex (SPC) which catalyzes the cleavage of N-terminal signal sequences from nascent proteins as they are translocated into the lumen of the endoplasmic reticulum. Dispensable for SPC enzymatic activity. This is Signal peptidase complex subunit 1 from Caenorhabditis briggsae.